Here is a 394-residue protein sequence, read N- to C-terminus: Anhydro-N-acetylmuramic acid kinase (394 aa).

Residue 11–18 (GTSADGID) coordinates ATP.

The protein belongs to the anhydro-N-acetylmuramic acid kinase family.

The catalysed reaction is 1,6-anhydro-N-acetyl-beta-muramate + ATP + H2O = N-acetyl-D-muramate 6-phosphate + ADP + H(+). The protein operates within amino-sugar metabolism; 1,6-anhydro-N-acetylmuramate degradation. Its pathway is cell wall biogenesis; peptidoglycan recycling. Its function is as follows. Catalyzes the specific phosphorylation of 1,6-anhydro-N-acetylmuramic acid (anhMurNAc) with the simultaneous cleavage of the 1,6-anhydro ring, generating MurNAc-6-P. Is required for the utilization of anhMurNAc either imported from the medium or derived from its own cell wall murein, and thus plays a role in cell wall recycling. The protein is Anhydro-N-acetylmuramic acid kinase of Deinococcus geothermalis (strain DSM 11300 / CIP 105573 / AG-3a).